The primary structure comprises 556 residues: 2-succinyl-5-enolpyruvyl-6-hydroxy-3-cyclohexene-1-carboxylate synthase (556 aa).

This sequence belongs to the TPP enzyme family. MenD subfamily. In terms of assembly, homodimer. Mg(2+) is required as a cofactor. Mn(2+) serves as cofactor. The cofactor is thiamine diphosphate.

It catalyses the reaction isochorismate + 2-oxoglutarate + H(+) = 5-enolpyruvoyl-6-hydroxy-2-succinyl-cyclohex-3-ene-1-carboxylate + CO2. The protein operates within quinol/quinone metabolism; 1,4-dihydroxy-2-naphthoate biosynthesis; 1,4-dihydroxy-2-naphthoate from chorismate: step 2/7. It participates in quinol/quinone metabolism; menaquinone biosynthesis. Functionally, catalyzes the thiamine diphosphate-dependent decarboxylation of 2-oxoglutarate and the subsequent addition of the resulting succinic semialdehyde-thiamine pyrophosphate anion to isochorismate to yield 2-succinyl-5-enolpyruvyl-6-hydroxy-3-cyclohexene-1-carboxylate (SEPHCHC). This Escherichia coli O17:K52:H18 (strain UMN026 / ExPEC) protein is 2-succinyl-5-enolpyruvyl-6-hydroxy-3-cyclohexene-1-carboxylate synthase.